The sequence spans 880 residues: DNA-directed RNA polymerase subunit beta C-terminal section (880 aa).

It belongs to the RNA polymerase beta chain family. In terms of assembly, in plastids the minimal PEP RNA polymerase catalytic core is composed of four subunits: alpha, beta, beta', and beta''. When a (nuclear-encoded) sigma factor is associated with the core the holoenzyme is formed, which can initiate transcription.

It is found in the plastid. Its subcellular location is the chloroplast. It carries out the reaction RNA(n) + a ribonucleoside 5'-triphosphate = RNA(n+1) + diphosphate. Its function is as follows. DNA-dependent RNA polymerase catalyzes the transcription of DNA into RNA using the four ribonucleoside triphosphates as substrates. The protein is DNA-directed RNA polymerase subunit beta C-terminal section (rpoB2) of Pleurastrum terricola (Filamentous green alga).